The sequence spans 360 residues: Peptide chain release factor 1 (360 aa).

Position 235 is an N5-methylglutamine (Gln-235).

Belongs to the prokaryotic/mitochondrial release factor family. Post-translationally, methylated by PrmC. Methylation increases the termination efficiency of RF1.

Its subcellular location is the cytoplasm. Functionally, peptide chain release factor 1 directs the termination of translation in response to the peptide chain termination codons UAG and UAA. The polypeptide is Peptide chain release factor 1 (Leptothrix cholodnii (strain ATCC 51168 / LMG 8142 / SP-6) (Leptothrix discophora (strain SP-6))).